A 316-amino-acid polypeptide reads, in one-letter code: Protoheme IX farnesyltransferase (316 aa).

9 helical membrane-spanning segments follow: residues 28–48 (WLAL…AAGM), 57–77 (IPIG…AGAI), 106–126 (AALV…WLAT), 129–149 (LAAD…TMWL), 156–176 (NIVI…AATM), 179–199 (MAVL…PHFW), 230–250 (ILIY…VHEV), 254–274 (YTVV…RVLM), and 296–316 (YSLV…VLIG).

Belongs to the UbiA prenyltransferase family. Protoheme IX farnesyltransferase subfamily.

It is found in the cell inner membrane. It carries out the reaction heme b + (2E,6E)-farnesyl diphosphate + H2O = Fe(II)-heme o + diphosphate. Its pathway is porphyrin-containing compound metabolism; heme O biosynthesis; heme O from protoheme: step 1/1. Its function is as follows. Converts heme B (protoheme IX) to heme O by substitution of the vinyl group on carbon 2 of heme B porphyrin ring with a hydroxyethyl farnesyl side group. The protein is Protoheme IX farnesyltransferase of Gluconobacter oxydans (strain 621H) (Gluconobacter suboxydans).